The primary structure comprises 139 residues: ATP synthase epsilon chain (139 aa).

The protein belongs to the ATPase epsilon chain family. In terms of assembly, F-type ATPases have 2 components, CF(1) - the catalytic core - and CF(0) - the membrane proton channel. CF(1) has five subunits: alpha(3), beta(3), gamma(1), delta(1), epsilon(1). CF(0) has three main subunits: a, b and c.

It localises to the cell membrane. Functionally, produces ATP from ADP in the presence of a proton gradient across the membrane. The sequence is that of ATP synthase epsilon chain from Streptococcus pneumoniae serotype 2 (strain D39 / NCTC 7466).